Reading from the N-terminus, the 858-residue chain is DNA mismatch repair protein MutS (858 aa).

618–625 (GPNMGGKS) is an ATP binding site.

Belongs to the DNA mismatch repair MutS family.

Its function is as follows. This protein is involved in the repair of mismatches in DNA. It is possible that it carries out the mismatch recognition step. This protein has a weak ATPase activity. The chain is DNA mismatch repair protein MutS from Shewanella woodyi (strain ATCC 51908 / MS32).